The chain runs to 484 residues: MPSAFGFRFDNTYRRLPEALFSDCLPQPVSTPAFVLFNDNLAQELGLDSEALSEHPEFFSGNELLAGSEPIAQAYAGHQFGSLTMLGDGRAVLLGEQLDGHGQRHDIQLKGAGRTPFSRGGDGRAALGPMLREYIVSEALHALNIATTRSLAVTRTGDRVRRDTLLPGAILTRVAASHIRVGTFQYAAGQQDPVLLEKLVDYTIARHYPALEGAENKALALFEAVMDRQIDLVVDWMRVGFIHGVLNTDNVTLSGESIDFGPCAFMDRFDPNTVFSSIDHQGRYAYGNQPSITQWNLGRFAETLLRMMDDNTDIAIEKATTSLKSFSLRYEEKWRAMMNKKLGLFGSETEDDTLIADLLTWMHAQNADYTNTFRDLIQDGLPDGEQYQSEAFQHWHQRWRARLARNSKPLASSLCLMRNHNPAVIPRNHLVEQALQAASEDNDMTPTHALLQALSAPYADRDSDDRYRQPAAPCEQVHQTFCGT.

Residues Gly87, Gly89, Arg90, Lys110, Asp122, Gly123, Arg173, and Arg180 each contribute to the ATP site. Residue Asp249 is the Proton acceptor of the active site. Mg(2+) contacts are provided by Asn250 and Asp259. Position 259 (Asp259) interacts with ATP.

This sequence belongs to the SELO family. It depends on Mg(2+) as a cofactor. The cofactor is Mn(2+).

It carries out the reaction L-seryl-[protein] + ATP = 3-O-(5'-adenylyl)-L-seryl-[protein] + diphosphate. The enzyme catalyses L-threonyl-[protein] + ATP = 3-O-(5'-adenylyl)-L-threonyl-[protein] + diphosphate. It catalyses the reaction L-tyrosyl-[protein] + ATP = O-(5'-adenylyl)-L-tyrosyl-[protein] + diphosphate. The catalysed reaction is L-histidyl-[protein] + UTP = N(tele)-(5'-uridylyl)-L-histidyl-[protein] + diphosphate. It carries out the reaction L-seryl-[protein] + UTP = O-(5'-uridylyl)-L-seryl-[protein] + diphosphate. The enzyme catalyses L-tyrosyl-[protein] + UTP = O-(5'-uridylyl)-L-tyrosyl-[protein] + diphosphate. In terms of biological role, nucleotidyltransferase involved in the post-translational modification of proteins. It can catalyze the addition of adenosine monophosphate (AMP) or uridine monophosphate (UMP) to a protein, resulting in modifications known as AMPylation and UMPylation. This Alcanivorax borkumensis (strain ATCC 700651 / DSM 11573 / NCIMB 13689 / SK2) protein is Protein nucleotidyltransferase YdiU.